A 226-amino-acid chain; its full sequence is Lipid phosphate phosphatase gamma (226 aa).

An N-acetylmethionine modification is found at Met-1. Helical transmembrane passes span 24-44, 52-72, 102-122, 128-148, and 152-174; these read LGHF…GGFV, ELQG…NEFI, FMFF…GFWF, WIMN…RVYL, and TVAQ…FWVV.

The protein belongs to the PA-phosphatase related phosphoesterase family. In terms of tissue distribution, expressed in root tips, root branch points, vascular tissue of cotyledons and leaves, pistil, anthers and filaments.

The protein resides in the plastid. Its subcellular location is the chloroplast inner membrane. Its activity is regulated as follows. Inhibited by Mg(2+). In terms of biological role, exhibits phosphatidate phosphatase (PAP) activity in vitro. May play a primary role as PAP in plastids. This is Lipid phosphate phosphatase gamma (LPPG) from Arabidopsis thaliana (Mouse-ear cress).